We begin with the raw amino-acid sequence, 483 residues long: Malonate-semialdehyde dehydrogenase 2 (483 aa).

F152, K176, E179, R180, and S229 together coordinate NAD(+). Catalysis depends on C284, which acts as the Nucleophile. An NAD(+)-binding site is contributed by E384.

This sequence belongs to the aldehyde dehydrogenase family. IolA subfamily. Homotetramer.

The enzyme catalyses 3-oxopropanoate + NAD(+) + CoA + H2O = hydrogencarbonate + acetyl-CoA + NADH + H(+). It carries out the reaction 2-methyl-3-oxopropanoate + NAD(+) + CoA + H2O = propanoyl-CoA + hydrogencarbonate + NADH + H(+). Its pathway is polyol metabolism; myo-inositol degradation into acetyl-CoA; acetyl-CoA from myo-inositol: step 7/7. In terms of biological role, catalyzes the oxidation of malonate semialdehyde (MSA) and methylmalonate semialdehyde (MMSA) into acetyl-CoA and propanoyl-CoA, respectively. Is involved in a myo-inositol catabolic pathway. Bicarbonate, and not CO2, is the end-product of the enzymatic reaction. This Bacillus mycoides (strain KBAB4) (Bacillus weihenstephanensis) protein is Malonate-semialdehyde dehydrogenase 2.